The following is a 346-amino-acid chain: Elongation factor Ts (346 aa).

Residues 80–83 (TDFV) are involved in Mg(2+) ion dislocation from EF-Tu.

Belongs to the EF-Ts family.

It is found in the cytoplasm. Its function is as follows. Associates with the EF-Tu.GDP complex and induces the exchange of GDP to GTP. It remains bound to the aminoacyl-tRNA.EF-Tu.GTP complex up to the GTP hydrolysis stage on the ribosome. The polypeptide is Elongation factor Ts (Streptococcus pneumoniae (strain 70585)).